The primary structure comprises 268 residues: Small ribosomal subunit protein eS1 (268 aa).

Residues 1–21 form a disordered region; it reads MAVGKNKGLSKGGKKGGKKKV.

This sequence belongs to the eukaryotic ribosomal protein eS1 family. Component of the small ribosomal subunit. Mature ribosomes consist of a small (40S) and a large (60S) subunit. The 40S subunit contains about 33 different proteins and 1 molecule of RNA (18S). The 60S subunit contains about 49 different proteins and 3 molecules of RNA (28S, 5.8S and 5S).

It localises to the cytoplasm. In terms of biological role, essential for oogenesis; required for late follicle cell development. This is Small ribosomal subunit protein eS1 from Drosophila mojavensis (Fruit fly).